Here is a 292-residue protein sequence, read N- to C-terminus: 4-hydroxy-tetrahydrodipicolinate synthase (292 aa).

Thr46 is a binding site for pyruvate. The Proton donor/acceptor role is filled by Tyr134. Lys162 (schiff-base intermediate with substrate) is an active-site residue. Residue Ile204 participates in pyruvate binding.

This sequence belongs to the DapA family. In terms of assembly, homotetramer; dimer of dimers.

Its subcellular location is the cytoplasm. It carries out the reaction L-aspartate 4-semialdehyde + pyruvate = (2S,4S)-4-hydroxy-2,3,4,5-tetrahydrodipicolinate + H2O + H(+). Its pathway is amino-acid biosynthesis; L-lysine biosynthesis via DAP pathway; (S)-tetrahydrodipicolinate from L-aspartate: step 3/4. Functionally, catalyzes the condensation of (S)-aspartate-beta-semialdehyde [(S)-ASA] and pyruvate to 4-hydroxy-tetrahydrodipicolinate (HTPA). The sequence is that of 4-hydroxy-tetrahydrodipicolinate synthase from Moorella thermoacetica (strain ATCC 39073 / JCM 9320).